Here is a 317-residue protein sequence, read N- to C-terminus: Acetyl-coenzyme A carboxylase carboxyl transferase subunit alpha (317 aa).

Positions 39–293 (RLQKKSNDLT…KAVLEKQLHE (255 aa)) constitute a CoA carboxyltransferase C-terminal domain.

It belongs to the AccA family. As to quaternary structure, acetyl-CoA carboxylase is a heterohexamer composed of biotin carboxyl carrier protein (AccB), biotin carboxylase (AccC) and two subunits each of ACCase subunit alpha (AccA) and ACCase subunit beta (AccD).

Its subcellular location is the cytoplasm. The catalysed reaction is N(6)-carboxybiotinyl-L-lysyl-[protein] + acetyl-CoA = N(6)-biotinyl-L-lysyl-[protein] + malonyl-CoA. It functions in the pathway lipid metabolism; malonyl-CoA biosynthesis; malonyl-CoA from acetyl-CoA: step 1/1. Its function is as follows. Component of the acetyl coenzyme A carboxylase (ACC) complex. First, biotin carboxylase catalyzes the carboxylation of biotin on its carrier protein (BCCP) and then the CO(2) group is transferred by the carboxyltransferase to acetyl-CoA to form malonyl-CoA. This Neisseria gonorrhoeae (strain NCCP11945) protein is Acetyl-coenzyme A carboxylase carboxyl transferase subunit alpha.